The primary structure comprises 526 residues: Exodeoxyribonuclease 7 large subunit (526 aa).

The tract at residues 497–526 is disordered; that stretch reads AMTTEGGTPPAGAKKRSTKPAEPPKQGSLF.

Belongs to the XseA family. In terms of assembly, heterooligomer composed of large and small subunits.

It localises to the cytoplasm. It catalyses the reaction Exonucleolytic cleavage in either 5'- to 3'- or 3'- to 5'-direction to yield nucleoside 5'-phosphates.. In terms of biological role, bidirectionally degrades single-stranded DNA into large acid-insoluble oligonucleotides, which are then degraded further into small acid-soluble oligonucleotides. In Rhizobium johnstonii (strain DSM 114642 / LMG 32736 / 3841) (Rhizobium leguminosarum bv. viciae), this protein is Exodeoxyribonuclease 7 large subunit.